The following is a 247-amino-acid chain: MIRRCFQVAARLGHHRGLLEAPRILPRLNPASAFGSSTDSMFSRFLPEKTDLKDYALPNASWCSDMLSLYQEFLEKTKSSGWIKLPSFKSNRDHIRGLKLPSGLAVSSDKGDCRIFTRCIQVEGQGFEYVIFFQPTQKKSVCLFQPGSYLEGPPGFAHGGSLAAMMDETFSKTAFLAGEGLFTLSLNIRFKNLIPVDSLVVMDVELDKIEDQKLYMSCIAHSRDQQTVYAKSSGVFLQLQLEEESPQ.

The Proton donor/acceptor role is filled by D167.

The protein belongs to the THEM4/THEM5 thioesterase family. In terms of assembly, homodimer.

It is found in the mitochondrion matrix. It carries out the reaction hexadecanoyl-CoA + H2O = hexadecanoate + CoA + H(+). The catalysed reaction is (9Z,12Z)-octadecadienoyl-CoA + H2O = (9Z,12Z)-octadecadienoate + CoA + H(+). The enzyme catalyses tetradecanoyl-CoA + H2O = tetradecanoate + CoA + H(+). It catalyses the reaction (9Z)-octadecenoyl-CoA + H2O = (9Z)-octadecenoate + CoA + H(+). It carries out the reaction (9Z)-hexadecenoyl-CoA + H2O = (9Z)-hexadecenoate + CoA + H(+). The catalysed reaction is (5Z,8Z,11Z,14Z)-eicosatetraenoyl-CoA + H2O = (5Z,8Z,11Z,14Z)-eicosatetraenoate + CoA + H(+). The enzyme catalyses octadecanoyl-CoA + H2O = octadecanoate + CoA + H(+). Functionally, has acyl-CoA thioesterase activity towards long-chain (C16 and C18) fatty acyl-CoA substrates, with a preference for linoleoyl-CoA and other unsaturated long-chain fatty acid-CoA esters. Plays an important role in mitochondrial fatty acid metabolism, and in remodeling of the mitochondrial lipid cardiolipin. Required for normal mitochondrial function. The chain is Acyl-coenzyme A thioesterase THEM5 (THEM5) from Homo sapiens (Human).